A 273-amino-acid chain; its full sequence is Imidazole glycerol phosphate synthase subunit HisF (273 aa).

Active-site residues include Asp-11 and Asp-134.

It belongs to the HisA/HisF family. As to quaternary structure, heterodimer of HisH and HisF.

The protein resides in the cytoplasm. It carries out the reaction 5-[(5-phospho-1-deoxy-D-ribulos-1-ylimino)methylamino]-1-(5-phospho-beta-D-ribosyl)imidazole-4-carboxamide + L-glutamine = D-erythro-1-(imidazol-4-yl)glycerol 3-phosphate + 5-amino-1-(5-phospho-beta-D-ribosyl)imidazole-4-carboxamide + L-glutamate + H(+). It functions in the pathway amino-acid biosynthesis; L-histidine biosynthesis; L-histidine from 5-phospho-alpha-D-ribose 1-diphosphate: step 5/9. IGPS catalyzes the conversion of PRFAR and glutamine to IGP, AICAR and glutamate. The HisF subunit catalyzes the cyclization activity that produces IGP and AICAR from PRFAR using the ammonia provided by the HisH subunit. The protein is Imidazole glycerol phosphate synthase subunit HisF of Methanocella arvoryzae (strain DSM 22066 / NBRC 105507 / MRE50).